The chain runs to 492 residues: Heat shock factor protein 4 (492 aa).

Residues 17–121 mediate DNA binding; sequence VPAFLGKLWA…QLLERVRRKV (105 aa). The tract at residues 129–203 is hydrophobic repeat HR-A/B; that stretch reads GRWRPEDLGR…GPLQTGSSGA (75 aa). The interactions with DUSP26, MAPK1 and MAPK2 stretch occupies residues 245 to 323; the sequence is LPETTLGLSS…ECDFCVTAPP (79 aa). Residues 250–286 form a disordered region; the sequence is LGLSSSHRTRGPIISDIHEDSPSPDGTRLSPSSGGRR. A Glycyl lysine isopeptide (Lys-Gly) (interchain with G-Cter in SUMO) cross-link involves residue Lys-294. At Ser-299 the chain carries Phosphoserine. The disordered stretch occupies residues 337 to 378; that stretch reads KGNFSPEGPRNAQQPEPRGPREVPDRGTLGLDRGARSPENLL. The segment at 365–390 is hydrophobic repeat HR-C; the sequence is LGLDRGARSPENLLPPMLLRAPPESV.

This sequence belongs to the HSF family. In terms of assembly, homotrimer. Exhibits constitutive DNA binding and forms trimers even in the absence of stress. Interacts with ALKBH4, DUSP26, MAPK1, MAPK2, MAPK8 and MAP kinase p38. In terms of processing, phosphorylated mainly on serine residues. Phosphorylation on Ser-299 promotes sumoylation on Lys-294. Constitutively sumoylated. Sumoylation represses the transcriptional activity and is promoted by phosphorylation on Ser-299.

The protein resides in the nucleus. Functionally, heat-shock transcription factor that specifically binds heat shock promoter elements (HSE). Required for denucleation and organelle rupture and degradation that occur during eye lens terminal differentiation, when fiber cells that compose the lens degrade all membrane-bound organelles in order to provide lens with transparency to allow the passage of light. In this process, may regulate denucleation of lens fiber cells in part by activating DNASE2B transcription. May be involved in DNA repair through the transcriptional regulation of RAD51. May up-regulate p53/TP53 protein in eye lens fiber cells, possibly through protein stabilization. In the eye lens, controls the expression of alpha-crystallin B chain/CRYAB and consequently may be involved in the regulation of lysosomal acidification. The polypeptide is Heat shock factor protein 4 (HSF4) (Canis lupus familiaris (Dog)).